A 648-amino-acid polypeptide reads, in one-letter code: S-M checkpoint control protein rad4 (648 aa).

2 consecutive BRCT domains span residues 2–92 and 96–185; these read GSSK…DDGL and KHFL…YFQL. The Nuclear localization signal motif lies at 242–249; the sequence is KRGKKRDR. 2 BRCT domains span residues 298–384 and 392–486; these read NEAK…EHAL and SLVP…SPWA. A Phosphoserine modification is found at S592. A Nuclear localization signal motif is present at residues 643–648; sequence RKLRRR.

Interacts with drc1/sld2. Interacts (via BRCT1,2 domains) with crb2; a single rad4 molecule interacts simultaneously with both 'Thr-187' phosphorylation sites in a crb2 dimer.

It is found in the nucleus. Functionally, essential component for DNA replication and also the checkpoint control system which couples S and M phases. May directly or indirectly interact with chromatin proteins to form the complex required for the initiation and/or progression of DNA synthesis. Interacts simultaneously with both 'Thr-187' phosphorylation sites in a crb2 dimer for establishing the DNA checkpoint. This is S-M checkpoint control protein rad4 (rad4) from Schizosaccharomyces pombe (strain 972 / ATCC 24843) (Fission yeast).